The chain runs to 200 residues: Dephospho-CoA kinase (200 aa).

The region spanning 4–200 is the DPCK domain; it reads TIGLTGSVAT…TFIERFVNNK (197 aa). 12–17 is a binding site for ATP; that stretch reads ATGKST.

The protein belongs to the CoaE family.

It localises to the cytoplasm. The enzyme catalyses 3'-dephospho-CoA + ATP = ADP + CoA + H(+). It participates in cofactor biosynthesis; coenzyme A biosynthesis; CoA from (R)-pantothenate: step 5/5. Functionally, catalyzes the phosphorylation of the 3'-hydroxyl group of dephosphocoenzyme A to form coenzyme A. This is Dephospho-CoA kinase from Listeria innocua serovar 6a (strain ATCC BAA-680 / CLIP 11262).